Consider the following 572-residue polypeptide: Pentatricopeptide repeat-containing protein At1g26900, mitochondrial (572 aa).

The transit peptide at 1-117 (MTLAITSRLR…RAFSVFNQLR (117 aa)) directs the protein to the mitochondrion. PPR repeat units follow at residues 89-123 (NLFM…GLTL), 124-158 (DRFS…GFMV), 159-189 (FTDL…MPQS), 191-225 (DAVT…EVVV), 226-260 (NVST…GLDL), 261-291 (DLHL…AIRK), 292-326 (DVVT…KMKP), 327-361 (NSST…RIAL), 362-392 (DAIL…MKDK), 393-427 (DVKS…NCKV), 430-460 (NEIT…MVEA), and 466-496 (KVEH…LPIT). A type E motif region spans residues 501 to 572 (AWRALLAACR…EAGYSAIEIE (72 aa)).

It belongs to the PPR family. PCMP-E subfamily.

The protein localises to the mitochondrion. The chain is Pentatricopeptide repeat-containing protein At1g26900, mitochondrial (PCMP-E54) from Arabidopsis thaliana (Mouse-ear cress).